Here is an 87-residue protein sequence, read N- to C-terminus: DNA-directed RNA polymerase subunit omega (87 aa).

It belongs to the RNA polymerase subunit omega family. The RNAP catalytic core consists of 2 alpha, 1 beta, 1 beta' and 1 omega subunit. When a sigma factor is associated with the core the holoenzyme is formed, which can initiate transcription.

The enzyme catalyses RNA(n) + a ribonucleoside 5'-triphosphate = RNA(n+1) + diphosphate. In terms of biological role, promotes RNA polymerase assembly. Latches the N- and C-terminal regions of the beta' subunit thereby facilitating its interaction with the beta and alpha subunits. This chain is DNA-directed RNA polymerase subunit omega, found in Pseudomonas fluorescens (strain Pf0-1).